Here is a 563-residue protein sequence, read N- to C-terminus: Arginine--tRNA ligase (563 aa).

A 'HIGH' region motif is present at residues 121 to 131 (PNIAKPFSIGH).

It belongs to the class-I aminoacyl-tRNA synthetase family. As to quaternary structure, monomer.

It localises to the cytoplasm. It carries out the reaction tRNA(Arg) + L-arginine + ATP = L-arginyl-tRNA(Arg) + AMP + diphosphate. This Streptococcus pyogenes serotype M1 protein is Arginine--tRNA ligase.